We begin with the raw amino-acid sequence, 179 residues long: NADH dehydrogenase [ubiquinone] 1 beta subcomplex subunit 9 (179 aa).

A2 is modified (N-acetylalanine). S85 carries the post-translational modification Phosphoserine.

This sequence belongs to the complex I LYR family. As to quaternary structure, mammalian complex I is composed of 45 different subunits.

It is found in the mitochondrion inner membrane. Accessory subunit of the mitochondrial membrane respiratory chain NADH dehydrogenase (Complex I), that is believed to be not involved in catalysis. Complex I functions in the transfer of electrons from NADH to the respiratory chain. The immediate electron acceptor for the enzyme is believed to be ubiquinone. The chain is NADH dehydrogenase [ubiquinone] 1 beta subcomplex subunit 9 (Ndufb9) from Mus musculus (Mouse).